Here is a 570-residue protein sequence, read N- to C-terminus: Sulfite reductase [NADPH] hemoprotein beta-component (570 aa).

Cys-434, Cys-440, Cys-479, and Cys-483 together coordinate [4Fe-4S] cluster. Cys-483 is a binding site for siroheme.

This sequence belongs to the nitrite and sulfite reductase 4Fe-4S domain family. In terms of assembly, alpha(8)-beta(8). The alpha component is a flavoprotein, the beta component is a hemoprotein. Requires siroheme as cofactor. The cofactor is [4Fe-4S] cluster.

The catalysed reaction is hydrogen sulfide + 3 NADP(+) + 3 H2O = sulfite + 3 NADPH + 4 H(+). The protein operates within sulfur metabolism; hydrogen sulfide biosynthesis; hydrogen sulfide from sulfite (NADPH route): step 1/1. Component of the sulfite reductase complex that catalyzes the 6-electron reduction of sulfite to sulfide. This is one of several activities required for the biosynthesis of L-cysteine from sulfate. The protein is Sulfite reductase [NADPH] hemoprotein beta-component of Salmonella agona (strain SL483).